Here is a 183-residue protein sequence, read N- to C-terminus: I-kappa-B like protein N2 (183 aa).

2 ANK repeats span residues 62–95 (DGNT…DLNL) and 99–129 (CHKP…NLEA). The disordered stretch occupies residues 163–183 (PRQDGSSEDEVSDSEEKSDSE).

It belongs to the polydnaviridae I-Kappa-B like protein family.

Its function is as follows. Suppresses the host immune response through NF-kappa-B inactivation. Possesses ankyrin repeat domains required for NF-kappa-B binding but lacks the regulatory regions required for dissociation from NF-kappa-B and degradation. Therefore, prevents host NF-kappa-B release and subsequent activation. The chain is I-kappa-B like protein N2 (N5) from Microplitis demolitor (Parasitoid wasp).